The primary structure comprises 65 residues: Large ribosomal subunit protein uL29 (65 aa).

It belongs to the universal ribosomal protein uL29 family.

This is Large ribosomal subunit protein uL29 from Paracidovorax citrulli (strain AAC00-1) (Acidovorax citrulli).